We begin with the raw amino-acid sequence, 346 residues long: tRNA N6-adenosine threonylcarbamoyltransferase (346 aa).

Positions 120, 124, and 141 each coordinate a divalent metal cation. Residues 141-145 (YVSGG), D173, G188, E192, and N277 each bind substrate. D305 is an a divalent metal cation binding site.

The protein belongs to the KAE1 / TsaD family. Component of the EKC/KEOPS complex composed of at least BUD32, CGI121, GON7, KAE1 and PCC1; the whole complex dimerizes. Requires a divalent metal cation as cofactor.

The protein resides in the cytoplasm. Its subcellular location is the nucleus. The enzyme catalyses L-threonylcarbamoyladenylate + adenosine(37) in tRNA = N(6)-L-threonylcarbamoyladenosine(37) in tRNA + AMP + H(+). Its function is as follows. Component of the EKC/KEOPS complex that is required for the formation of a threonylcarbamoyl group on adenosine at position 37 (t(6)A37) in tRNAs that read codons beginning with adenine. The complex is probably involved in the transfer of the threonylcarbamoyl moiety of threonylcarbamoyl-AMP (TC-AMP) to the N6 group of A37. KAE1 likely plays a direct catalytic role in this reaction, but requires other protein(s) of the complex to fulfill this activity. The EKC/KEOPS complex also promotes both telomere uncapping and telomere elongation. The complex is required for efficient recruitment of transcriptional coactivators. This is tRNA N6-adenosine threonylcarbamoyltransferase from Gibberella zeae (strain ATCC MYA-4620 / CBS 123657 / FGSC 9075 / NRRL 31084 / PH-1) (Wheat head blight fungus).